The chain runs to 1006 residues: E3 ubiquitin-protein ligase MIB1 (1006 aa).

Positions 6–74 (NNRVMVEGVG…AYDLRILDSA (69 aa)) constitute an MIB/HERC2 1 domain. Residues 80–132 (HDGTMCDTCRQQPIIGIRWKCAECTNYDLCTVCYHGDKHHLRHRFYRITTPGS) form a ZZ-type zinc finger. Cys-85, Cys-88, Cys-100, Cys-103, Cys-109, Cys-112, His-118, and His-122 together coordinate Zn(2+). The MIB/HERC2 2 domain occupies 143-221 (SKKITARGIF…MSDLKCVQDA (79 aa)). Ser-408 is modified (phosphoserine). ANK repeat units follow at residues 430-460 (DLNEELVKAAANGDVAKVEDLLKRPDVDVNG), 463-492 (AGHTAMQAASQNGHVDILKLLLKQNVDVEA), 496-525 (DGDRAVHHAAFGDEGAVIEVLHRGSADLNA), 529-558 (RRQTPLHIAVNKGHLQVVKTLLDFGCHPSL), 562-591 (EGDTPLHDAISKKRDDILAVLLEAGADVTI), 595-627 (NGFNALHHAALRGNPSAMRVLLSKLPRPWIVDE), 631-661 (DGYTALHLAALNNHVEVAELLVHQGNANLDI), 665-694 (NQQTALHLAVERQHTQIVRLLVRAGAKLDI), and 698-729 (DGDTPLHEALRHHTLSQLRQLQDMQDVGKVDA). RING-type zinc fingers lie at residues 819–854 (CMVCSDMKRDTLFGPCGHIATCSLCSPRVKKCLICK) and 866–901 (CVVCSDKKAAVLFQPCGHMCACENCASLMKKCVQCR). Residues 935–962 (QKDKDNTNVNADVQKLQQQLQDIKEQTM) are a coiled coil. The RING-type 3 zinc-finger motif lies at 963–996 (CPVCLDRLKNMIFLCGHGTCQLCGDRMSECPICR).

Interacts with CEP131 and PCM1. Ubiquitinated; this modification is inhibited in response to cellular stress, such as ultraviolet light (UV) radiation or heat shock. Ubiquitinated; possibly via autoubiquitination. As to expression, detected in all tissues tested. Present in embryo, embryonic stem cells, bladder, skeletal muscle, bladder, uterus, testis, stomach, colon, ileum, trachea, lung, aorta, kidney, spleen, liver and vas deferens (at protein level). Highly expressed in testis.

Its subcellular location is the cytoplasm. It is found in the cytoskeleton. The protein resides in the microtubule organizing center. The protein localises to the centrosome. It localises to the centriolar satellite. Its subcellular location is the cell membrane. It catalyses the reaction S-ubiquitinyl-[E2 ubiquitin-conjugating enzyme]-L-cysteine + [acceptor protein]-L-lysine = [E2 ubiquitin-conjugating enzyme]-L-cysteine + N(6)-ubiquitinyl-[acceptor protein]-L-lysine.. The protein operates within protein modification; protein ubiquitination. E3 ubiquitin-protein ligase that mediates ubiquitination of Delta receptors, which act as ligands of Notch proteins. Positively regulates the Delta-mediated Notch signaling by ubiquitinating the intracellular domain of Delta, leading to endocytosis of Delta receptors. Involved in ubiquitination of centriolar satellite CEP131, CEP290 and PCM1 proteins and hence inhibits primary cilium formation in proliferating cells. Mediates 'Lys-63'-linked polyubiquitination of TBK1, which probably participates in kinase activation. Probably mediates ubiquitination and subsequent proteasomal degradation of DAPK1, thereby antagonizing anti-apoptotic effects of DAPK1 to promote TNF-induced apoptosis. In Mus musculus (Mouse), this protein is E3 ubiquitin-protein ligase MIB1 (Mib1).